Here is a 294-residue protein sequence, read N- to C-terminus: Ferredoxin--NADP reductase (294 aa).

Residues 13 to 137 enclose the FAD-binding FR-type domain; that stretch reads KNPYIGKCLS…TGPVGKEMLL (125 aa). Residues 72 to 75, 93 to 95, Tyr99, 111 to 113, and Thr152 contribute to the FAD site; these read RLYS, CVR, and VCS. Residues Ser75 and Arg95 each coordinate NADP(+). Residues Thr152, 184-185, 214-215, Lys224, 224-228, 253-254, and Glu292 each bind NADP(+); these read IP, SR, KMYIQ, and GL.

Belongs to the ferredoxin--NADP reductase type 1 family. FAD serves as cofactor.

Its subcellular location is the cellular thylakoid membrane. It catalyses the reaction 2 reduced [2Fe-2S]-[ferredoxin] + NADP(+) + H(+) = 2 oxidized [2Fe-2S]-[ferredoxin] + NADPH. The polypeptide is Ferredoxin--NADP reductase (petH) (Spirulina sp).